The chain runs to 100 residues: Integration host factor subunit alpha (100 aa).

A disordered region spans residues 53-72 (FDLRDKRQRPGRNPKTGEEI).

Belongs to the bacterial histone-like protein family. In terms of assembly, heterodimer of an alpha and a beta chain.

In terms of biological role, this protein is one of the two subunits of integration host factor, a specific DNA-binding protein that functions in genetic recombination as well as in transcriptional and translational control. In Pseudomonas putida (strain ATCC 700007 / DSM 6899 / JCM 31910 / BCRC 17059 / LMG 24140 / F1), this protein is Integration host factor subunit alpha.